We begin with the raw amino-acid sequence, 152 residues long: Superoxide dismutase [Cu-Zn] 1 (152 aa).

3 residues coordinate Cu cation: His-45, His-47, and His-62. The cysteines at positions 56 and 145 are disulfide-linked. Zn(2+)-binding residues include His-62, His-70, His-79, and Asp-82. His-119 serves as a coordination point for Cu cation.

This sequence belongs to the Cu-Zn superoxide dismutase family. In terms of assembly, homodimer. Requires Cu cation as cofactor. Zn(2+) is required as a cofactor.

It is found in the cytoplasm. It catalyses the reaction 2 superoxide + 2 H(+) = H2O2 + O2. In terms of biological role, destroys radicals which are normally produced within the cells and which are toxic to biological systems. In Mesembryanthemum crystallinum (Common ice plant), this protein is Superoxide dismutase [Cu-Zn] 1 (SODCC.1).